The following is a 385-amino-acid chain: Putative F-box protein At1g49610 (385 aa).

One can recognise an F-box domain in the interval 25-73; that stretch reads VDSISSLPDVILQENLSLIPTKFAIRTSVLSKRWRHVWSETPSLDFDDC.

In Arabidopsis thaliana (Mouse-ear cress), this protein is Putative F-box protein At1g49610.